Reading from the N-terminus, the 258-residue chain is Thiamine thiazole synthase (258 aa).

NAD(+)-binding positions include alanine 36, 55-56, glycine 63, valine 127, and 154-156; these read EK and HVD. Fe cation-binding residues include aspartate 156 and histidine 171. An NAD(+)-binding site is contributed by methionine 224. Arginine 234 contributes to the glycine binding site.

This sequence belongs to the THI4 family. As to quaternary structure, homooctamer; tetramer of dimers. Fe(2+) is required as a cofactor.

It carries out the reaction hydrogen sulfide + glycine + NAD(+) = ADP-5-ethyl-4-methylthiazole-2-carboxylate + nicotinamide + 3 H2O + H(+). The protein operates within cofactor biosynthesis; thiamine diphosphate biosynthesis. Functionally, involved in the biosynthesis of the thiazole moiety of thiamine. Catalyzes the conversion of NAD and glycine to adenosine diphosphate 5-(2-hydroxyethyl)-4-methylthiazole-2-carboxylate (ADT), an adenylated thiazole intermediate, using free sulfide as a source of sulfur. This is Thiamine thiazole synthase from Methanococcoides burtonii (strain DSM 6242 / NBRC 107633 / OCM 468 / ACE-M).